We begin with the raw amino-acid sequence, 266 residues long: Undecaprenyl-diphosphatase (266 aa).

Helical transmembrane passes span 1 to 21 (MTLL…FLPV), 40 to 60 (LPLY…LVVL), 90 to 110 (LLVV…KPIF), 113 to 133 (LNQP…LWFT), 145 to 165 (LSWL…IPGI), 188 to 208 (FSFL…IDEV), 217 to 237 (PLLG…LWLF), and 245 to 265 (FKWF…KVAM).

Belongs to the UppP family.

The protein resides in the cell inner membrane. It catalyses the reaction di-trans,octa-cis-undecaprenyl diphosphate + H2O = di-trans,octa-cis-undecaprenyl phosphate + phosphate + H(+). Functionally, catalyzes the dephosphorylation of undecaprenyl diphosphate (UPP). Confers resistance to bacitracin. This is Undecaprenyl-diphosphatase from Acaryochloris marina (strain MBIC 11017).